A 431-amino-acid chain; its full sequence is Lipoyl synthase 2, mitochondrial (431 aa).

A disordered region spans residues 21 to 43 (SPLGKLQEERGEGVAKDPKKDKQ). Residues 26-40 (LQEERGEGVAKDPKK) show a composition bias toward basic and acidic residues. 7 residues coordinate [4Fe-4S] cluster: C127, C132, C138, C159, C163, C166, and S375. The Radical SAM core domain occupies 142-364 (DEEEGTATAT…EEEAMAMGFL (223 aa)).

Belongs to the radical SAM superfamily. Lipoyl synthase family. The cofactor is [4Fe-4S] cluster.

It is found in the mitochondrion. It carries out the reaction [[Fe-S] cluster scaffold protein carrying a second [4Fe-4S](2+) cluster] + N(6)-octanoyl-L-lysyl-[protein] + 2 oxidized [2Fe-2S]-[ferredoxin] + 2 S-adenosyl-L-methionine + 4 H(+) = [[Fe-S] cluster scaffold protein] + N(6)-[(R)-dihydrolipoyl]-L-lysyl-[protein] + 4 Fe(3+) + 2 hydrogen sulfide + 2 5'-deoxyadenosine + 2 L-methionine + 2 reduced [2Fe-2S]-[ferredoxin]. Its pathway is protein modification; protein lipoylation via endogenous pathway; protein N(6)-(lipoyl)lysine from octanoyl-[acyl-carrier-protein]: step 2/2. In terms of biological role, catalyzes the radical-mediated insertion of two sulfur atoms into the C-6 and C-8 positions of the octanoyl moiety bound to the lipoyl domains of lipoate-dependent enzymes, thereby converting the octanoylated domains into lipoylated derivatives. This is Lipoyl synthase 2, mitochondrial from Trypanosoma cruzi (strain CL Brener).